We begin with the raw amino-acid sequence, 445 residues long: Rab GDP dissociation inhibitor beta (445 aa).

M1 is modified (N-acetylmethionine). An N6-succinyllysine modification is found at K57. K112 is subject to N6-acetyllysine. Residue S130 is modified to Phosphoserine. Position 269 is an N6-acetyllysine (K269). S382 carries the phosphoserine modification.

This sequence belongs to the Rab GDI family. As to quaternary structure, interacts with RHOH. Interacts with the GDP-bound inactive forms of RAB3A, RAB3B, RAB3C, RAB5A, RAB5B, RAB5C, RAB8A, RAB8B, RAB10, RAB12, RAB35, and RAB43; binds RAB3D to a lesser extent. Interacts with DZIP1; this interaction negatively regulates the interaction of GDI2 with GDP-bound RAB8A.

The protein localises to the cytoplasm. Its subcellular location is the membrane. It localises to the golgi apparatus. The protein resides in the trans-Golgi network. Functionally, GDP-dissociation inhibitor preventing the GDP to GTP exchange of most Rab proteins. By keeping these small GTPases in their inactive GDP-bound form regulates intracellular membrane trafficking. Negatively regulates protein transport to the cilium and ciliogenesis through the inhibition of RAB8A. The polypeptide is Rab GDP dissociation inhibitor beta (GDI2) (Pongo abelii (Sumatran orangutan)).